The sequence spans 144 residues: Bacilliredoxin SH1478 (144 aa).

Belongs to the bacilliredoxin family.

The sequence is that of Bacilliredoxin SH1478 from Staphylococcus haemolyticus (strain JCSC1435).